We begin with the raw amino-acid sequence, 419 residues long: GTPase Obg (419 aa).

An Obg domain is found at Met-1 to Leu-158. Residues Ala-159–Gln-327 enclose the OBG-type G domain. Residues Gly-165 to Ser-172, Phe-190 to Val-194, Asp-212 to Gly-215, Asn-282 to Asp-285, and Ser-308 to Val-310 contribute to the GTP site. Ser-172 and Thr-192 together coordinate Mg(2+). Residues Arg-342 to Glu-419 form the OCT domain.

The protein belongs to the TRAFAC class OBG-HflX-like GTPase superfamily. OBG GTPase family. In terms of assembly, monomer. Mg(2+) is required as a cofactor.

It localises to the cytoplasm. Its function is as follows. An essential GTPase which binds GTP, GDP and possibly (p)ppGpp with moderate affinity, with high nucleotide exchange rates and a fairly low GTP hydrolysis rate. Plays a role in control of the cell cycle, stress response, ribosome biogenesis and in those bacteria that undergo differentiation, in morphogenesis control. The polypeptide is GTPase Obg (Syntrophomonas wolfei subsp. wolfei (strain DSM 2245B / Goettingen)).